A 993-amino-acid polypeptide reads, in one-letter code: Importin subunit beta-5 (993 aa).

The Importin N-terminal domain occupies 24–100; sequence AELGLRDLEK…RETLLHLLVS (77 aa).

Its subcellular location is the nucleus. In terms of biological role, required for nuclear protein import and mediates docking of import substrate to distinct nucleoporins. Serves a receptor for nuclear localization signals. Mediates the nuclear import of TATA-binding protein (TBP) and of histones H2A and H2B. This chain is Importin subunit beta-5 (kap114), found in Schizosaccharomyces pombe (strain 972 / ATCC 24843) (Fission yeast).